A 439-amino-acid chain; its full sequence is MKKLYLKTHGCQMNEYDSAKMADVLKFSHGLELTEDPAVADVFLLNTCSVREKAQTKVFSELGRWRPFKEKRPHVVIGVGGCVASQEGETILKQAPFVDIVFGPQTLHRLPDLLDSVIQKRKSVVDITFPEIEKFDRLPQPRAEGPSAFVSIMEGCSKYCTFCVVPYTRGEEISRPFDDVIAEVASLCEQGVREITLLGQNVNDYCGLMHDGQVADLALLIHYLAAMDNIERIRFTTSHPSAFSENLIDAYAEEPKLANHLHLPVQSGSDRILAAMKRNYTVLEYKSKIRKLRAVRPDISLSSDFIIGFPGETDADFEATMNLIHDMGFDHSFSFIYSPRPGTPAAQLPDDVPMAVKKERLAILQNRINVKAAEISQSMVGTQQRILVTGPSKKYPDQLSGRTENNRVVNFNGDTPLIGQMVTIKIKEARPYSLWGEIC.

The 118-residue stretch at 2–119 folds into the MTTase N-terminal domain; that stretch reads KKLYLKTHGC…LPDLLDSVIQ (118 aa). Residues cysteine 11, cysteine 48, cysteine 82, cysteine 156, cysteine 160, and cysteine 163 each coordinate [4Fe-4S] cluster. The 233-residue stretch at 142-374 folds into the Radical SAM core domain; sequence RAEGPSAFVS…QNRINVKAAE (233 aa). One can recognise a TRAM domain in the interval 377–439; that stretch reads QSMVGTQQRI…RPYSLWGEIC (63 aa).

The protein belongs to the methylthiotransferase family. MiaB subfamily. Monomer. The cofactor is [4Fe-4S] cluster.

The protein resides in the cytoplasm. The catalysed reaction is N(6)-dimethylallyladenosine(37) in tRNA + (sulfur carrier)-SH + AH2 + 2 S-adenosyl-L-methionine = 2-methylsulfanyl-N(6)-dimethylallyladenosine(37) in tRNA + (sulfur carrier)-H + 5'-deoxyadenosine + L-methionine + A + S-adenosyl-L-homocysteine + 2 H(+). In terms of biological role, catalyzes the methylthiolation of N6-(dimethylallyl)adenosine (i(6)A), leading to the formation of 2-methylthio-N6-(dimethylallyl)adenosine (ms(2)i(6)A) at position 37 in tRNAs that read codons beginning with uridine. The protein is tRNA-2-methylthio-N(6)-dimethylallyladenosine synthase of Coxiella burnetii (strain Dugway 5J108-111).